The sequence spans 180 residues: Fucolectin-3 (180 aa).

Residues 1–22 form the signal peptide; sequence MEVKMIILLFQILAISTLKSDS. The tract at residues 31–179 is F5/8 type C-like; sequence QENVALRGRA…VEVNVLFPAP (149 aa). Residues Asn58, Asp61, Asn63, and Ser72 each coordinate Ca(2+). Cystine bridges form between Cys73–Cys168, Cys104–Cys105, and Cys130–Cys146. Positions 75 and 101 each coordinate alpha-L-fucose. Positions 101 to 103 match the Cell attachment site motif; the sequence is RGD. Arg108 provides a ligand contact to alpha-L-fucose. The Ca(2+) site is built by Cys168 and Glu169.

The protein belongs to the fucolectin family. As to quaternary structure, homotrimer. As to expression, parenchymal hepatocytes.

It localises to the secreted. It is found in the extracellular space. In terms of biological role, acts as a defensive agent. Recognizes blood group fucosylated oligosaccharides including A, B, H and Lewis B-type antigens. Does not recognize Lewis A antigen and has low affinity for monovalent haptens. The sequence is that of Fucolectin-3 from Anguilla japonica (Japanese eel).